The sequence spans 208 residues: Ribosome maturation factor RimP (208 aa).

Residues 189 to 208 (EAPETGATTMARDGSEEETK) are disordered.

The protein belongs to the RimP family.

Its subcellular location is the cytoplasm. Its function is as follows. Required for maturation of 30S ribosomal subunits. The sequence is that of Ribosome maturation factor RimP from Ruegeria pomeroyi (strain ATCC 700808 / DSM 15171 / DSS-3) (Silicibacter pomeroyi).